Consider the following 807-residue polypeptide: Spondin-1 (807 aa).

A signal peptide spans 1–28; that stretch reads MRLSPVLLRLSRGPALLALALPLAVALA. The Reelin domain maps to 29–194; that stretch reads FSDETLDKVP…DSTFDGVTDK (166 aa). Intrachain disulfides connect Cys-44–Cys-128, Cys-156–Cys-182, Cys-199–Cys-336, Cys-200–Cys-340, Cys-202–Cys-415, Cys-443–Cys-480, Cys-454–Cys-489, Cys-459–Cys-494, Cys-502–Cys-538, Cys-513–Cys-517, Cys-548–Cys-554, Cys-559–Cys-595, Cys-570–Cys-574, Cys-605–Cys-610, Cys-615–Cys-650, Cys-626–Cys-630, and Cys-660–Cys-665. Residues 195–388 form the Spondin domain; the sequence is PILDCCACGT…LTSLDHPQSP (194 aa). Asn-214 carries an N-linked (GlcNAc...) asparagine glycan. Ca(2+)-binding residues include Asp-325, Asp-354, and Asp-358. TSP type-1 domains lie at 442–495, 501–555, 558–611, 614–666, 668–721, and 754–806; these read TCIY…PGCS, TCTM…EECS, SCLT…PECH, PCLL…PECP, DCEL…RKCL, and GCRM…NVHP. Asn-681 is a glycosylation site (N-linked (GlcNAc...) asparagine).

As to quaternary structure, binds to the central extracellular domain of APP and inhibits beta-secretase cleavage of APP.

It localises to the secreted. The protein localises to the extracellular space. It is found in the extracellular matrix. Cell adhesion protein that promotes the attachment of spinal cord and sensory neuron cells and the outgrowth of neurites in vitro. May contribute to the growth and guidance of axons in both the spinal cord and the PNS. Major factor for vascular smooth muscle cell. This Bos taurus (Bovine) protein is Spondin-1 (SPON1).